A 205-amino-acid chain; its full sequence is High frequency lysogenization protein HflD homolog (205 aa).

It belongs to the HflD family.

The protein localises to the cytoplasm. It is found in the cell inner membrane. This is High frequency lysogenization protein HflD homolog from Vibrio vulnificus (strain CMCP6).